We begin with the raw amino-acid sequence, 202 residues long: Na(+)-translocating NADH-quinone reductase subunit E (202 aa).

Transmembrane regions (helical) follow at residues 11-31 (SVFI…FIAV), 35-55 (IETA…TVPA), 81-101 (FIAL…LEMV), 114-134 (GIFL…LFMI), 144-164 (VVYG…MAGV), and 180-200 (LGIT…FSGI).

The protein belongs to the NqrDE/RnfAE family. As to quaternary structure, composed of six subunits; NqrA, NqrB, NqrC, NqrD, NqrE and NqrF.

It localises to the cell inner membrane. The enzyme catalyses a ubiquinone + n Na(+)(in) + NADH + H(+) = a ubiquinol + n Na(+)(out) + NAD(+). NQR complex catalyzes the reduction of ubiquinone-1 to ubiquinol by two successive reactions, coupled with the transport of Na(+) ions from the cytoplasm to the periplasm. NqrA to NqrE are probably involved in the second step, the conversion of ubisemiquinone to ubiquinol. The sequence is that of Na(+)-translocating NADH-quinone reductase subunit E from Methylococcus capsulatus (strain ATCC 33009 / NCIMB 11132 / Bath).